A 260-amino-acid polypeptide reads, in one-letter code: MKKSILALSLLVGLSTAASSYAALPETVRIGTDTTYAPFSSKDAKGDFVGFDIDLGNEMCKRMQVKCTWVASDFDALIPSLKAKKIDAIISSLSITDKRQQEIAFSDKLYAADSRLIAAKGSPIQPTLDSLKGKHVGVLQGSTQEAYANETWRSKGVDVVAYANQDLVYSDLAAGRLDAALQDEVAASEGFLKQPAGKDFAFAGSSVKDKKYFGDGTGVGLRKDDAELTAAFNKALGELRQDGTYDKMAKKYFDFNVYGD.

A signal peptide spans 1–22 (MKKSILALSLLVGLSTAASSYA). Residue aspartate 33 coordinates L-arginine. An L-lysine-binding site is contributed by aspartate 33. Position 33 (aspartate 33) interacts with L-ornithine. Cysteine 60 and cysteine 67 form a disulfide bridge. Residues serine 91, serine 92, serine 94, arginine 99, threonine 143, and aspartate 183 each contribute to the L-arginine site. The L-ornithine site is built by serine 91, serine 92, serine 94, arginine 99, threonine 143, and aspartate 183. Positions 92, 94, 99, and 143 each coordinate L-lysine.

This sequence belongs to the bacterial solute-binding protein 3 family. In terms of assembly, the complex is composed of two ATP-binding proteins (HisP), two transmembrane proteins (HisM and HisQ) and a solute-binding protein (ArgT).

The protein resides in the periplasm. In terms of biological role, part of the ABC transporter complex HisPMQ-ArgT involved in lysine/arginine/ornithine transport. Binds lysine, arginine and ornithine. Stimulates ATPase activity of HisP. The chain is Lysine/arginine/ornithine-binding periplasmic protein (argT) from Escherichia coli (strain K12).